The primary structure comprises 556 residues: Glucose-6-phosphate isomerase (556 aa).

The Proton donor role is filled by glutamate 360. Catalysis depends on residues histidine 391 and lysine 519.

The protein belongs to the GPI family.

It localises to the cytoplasm. The enzyme catalyses alpha-D-glucose 6-phosphate = beta-D-fructose 6-phosphate. It participates in carbohydrate biosynthesis; gluconeogenesis. The protein operates within carbohydrate degradation; glycolysis; D-glyceraldehyde 3-phosphate and glycerone phosphate from D-glucose: step 2/4. In terms of biological role, catalyzes the reversible isomerization of glucose-6-phosphate to fructose-6-phosphate. This chain is Glucose-6-phosphate isomerase, found in Acinetobacter baumannii (strain AB0057).